The primary structure comprises 880 residues: Valine--tRNA ligase (880 aa).

A 'HIGH' region motif is present at residues 49–59; sequence PNVTGKLHLGH. The short motif at 525-529 is the 'KMSKS' region element; the sequence is KMSKS. Position 528 (Lys-528) interacts with ATP. Residues 809–880 adopt a coiled-coil conformation; sequence LEGLINIDEE…VEKRIAELKN (72 aa).

Belongs to the class-I aminoacyl-tRNA synthetase family. ValS type 1 subfamily. In terms of assembly, monomer.

It localises to the cytoplasm. It carries out the reaction tRNA(Val) + L-valine + ATP = L-valyl-tRNA(Val) + AMP + diphosphate. Its function is as follows. Catalyzes the attachment of valine to tRNA(Val). As ValRS can inadvertently accommodate and process structurally similar amino acids such as threonine, to avoid such errors, it has a 'posttransfer' editing activity that hydrolyzes mischarged Thr-tRNA(Val) in a tRNA-dependent manner. The sequence is that of Valine--tRNA ligase from Bacillus licheniformis (strain ATCC 14580 / DSM 13 / JCM 2505 / CCUG 7422 / NBRC 12200 / NCIMB 9375 / NCTC 10341 / NRRL NRS-1264 / Gibson 46).